Reading from the N-terminus, the 522-residue chain is Colicin-E1 (522 aa).

Disordered regions lie at residues 26–52 (NGTP…AAIH) and 136–165 (EEKA…REKA). Positions 30–42 (DGSGSGGGGGKGG) are enriched in gly residues. The next 2 helical transmembrane spans lie at 471-487 (AADA…FSLL) and 494-510 (IWGI…YIDK).

It belongs to the channel forming colicin family.

It localises to the cell membrane. Its function is as follows. This colicin is a channel-forming colicin. This class of transmembrane toxins depolarize the cytoplasmic membrane, leading to dissipation of cellular energy. In terms of biological role, colicins are polypeptide toxins produced by and active against E.coli and closely related bacteria. In Escherichia coli, this protein is Colicin-E1 (cea).